The primary structure comprises 420 residues: DNA replication and repair protein RecF (420 aa).

Glycine 30–threonine 37 contributes to the ATP binding site. A disordered region spans residues arginine 175–arginine 214.

The protein belongs to the RecF family.

It is found in the cytoplasm. Its function is as follows. The RecF protein is involved in DNA metabolism; it is required for DNA replication and normal SOS inducibility. RecF binds preferentially to single-stranded, linear DNA. It also seems to bind ATP. The chain is DNA replication and repair protein RecF from Nocardioides sp. (strain ATCC BAA-499 / JS614).